The chain runs to 408 residues: uncharacterized protein (408 aa).

12 helical membrane-spanning segments follow: residues 9 to 29, 49 to 69, 77 to 97, 100 to 120, 135 to 155, 167 to 187, 216 to 236, 252 to 272, 283 to 303, 308 to 328, 340 to 360, and 373 to 393; these read WFVL…RNSF, VSVS…GFFI, IMAL…YSPN, VFSA…VGVT, LALA…SPIW, TYTI…VFGM, LIHI…IIDA, GMMA…GWLS, SILF…ILGI, LWYF…IPLT, LIGS…ALSV, and YLLI…IELV.

Belongs to the major facilitator superfamily.

It localises to the cell membrane. This is an uncharacterized protein from Bacillus subtilis (strain 168).